Consider the following 478-residue polypeptide: ATP synthase subunit beta (478 aa).

163–170 (GGAGVGKT) provides a ligand contact to ATP.

This sequence belongs to the ATPase alpha/beta chains family. In terms of assembly, F-type ATPases have 2 components, CF(1) - the catalytic core - and CF(0) - the membrane proton channel. CF(1) has five subunits: alpha(3), beta(3), gamma(1), delta(1), epsilon(1). CF(0) has three main subunits: a(1), b(2) and c(9-12). The alpha and beta chains form an alternating ring which encloses part of the gamma chain. CF(1) is attached to CF(0) by a central stalk formed by the gamma and epsilon chains, while a peripheral stalk is formed by the delta and b chains.

Its subcellular location is the cell inner membrane. It catalyses the reaction ATP + H2O + 4 H(+)(in) = ADP + phosphate + 5 H(+)(out). Functionally, produces ATP from ADP in the presence of a proton gradient across the membrane. The catalytic sites are hosted primarily by the beta subunits. The chain is ATP synthase subunit beta from Aquifex pyrophilus.